Consider the following 162-residue polypeptide: UPF0114 protein Shewmr4_0646 (162 aa).

Transmembrane regions (helical) follow at residues 15–35 (IMAP…IKFF), 53–73 (LVLV…IVMV), 108–128 (KVAA…FMDV), and 136–156 (IMWY…MGYL).

It belongs to the UPF0114 family.

The protein localises to the cell membrane. The polypeptide is UPF0114 protein Shewmr4_0646 (Shewanella sp. (strain MR-4)).